The primary structure comprises 860 residues: Probable linoleate 9S-lipoxygenase 4 (860 aa).

Residues 29–159 enclose the PLAT domain; the sequence is NALDFTDLAG…RYKSDRIFFA (131 aa). The region spanning 162 to 860 is the Lipoxygenase domain; sequence PYLPSETPEL…GKGIPNSVSI (699 aa). The tract at residues 209-246 is disordered; sequence PDQGKENVRTTLGGSADYPYPRRGRTGRPPTRTDPKSE. Residues His521, His526, His712, Asn716, and Ile860 each contribute to the Fe cation site.

It belongs to the lipoxygenase family. As to quaternary structure, monomer. It depends on Fe cation as a cofactor. Expressed in tubers and roots. Not detected in leaves, flowers, stems, shoot tips, or axillary buds.

The protein resides in the cytoplasm. The catalysed reaction is (9Z,12Z)-octadecadienoate + O2 = (9S)-hydroperoxy-(10E,12Z)-octadecadienoate. Its pathway is lipid metabolism; oxylipin biosynthesis. Its function is as follows. Plant lipoxygenases may be involved in a number of diverse aspects of plant physiology including growth and development, pest resistance, and senescence or responses to wounding. Catalyzes the hydroperoxidation of lipids containing a cis,cis-1,4-pentadiene structure. This is Probable linoleate 9S-lipoxygenase 4 (LOX1.4) from Solanum tuberosum (Potato).